Here is a 774-residue protein sequence, read N- to C-terminus: Lysyl oxidase homolog 2 (774 aa).

An N-terminal signal peptide occupies residues 1–25 (MERPLCSHLCSCLAVLALLSPLSLA). SRCR domains follow at residues 58–159 (LRLA…VVCS), 188–302 (IRAI…VSCV), 326–425 (VRLR…VRCN), and 435–544 (LRLN…VACS). Cystine bridges form between C84–C148, C97–C158, C128–C138, C218–C291, C231–C301, C265–C275, C351–C414, C364–C424, and C395–C405. The N-linked (GlcNAc...) asparagine glycan is linked to N288. A glycan (N-linked (GlcNAc...) asparagine) is linked at N455. 3 disulfide bridges follow: C464–C530, C477–C543, and C511–C521. A lysyl-oxidase like region spans residues 548–751 (PDLVLNAEMV…WMYNCHIGGS (204 aa)). 2 residues coordinate Ca(2+): D549 and L550. Disulfide bonds link C573-C625, C579-C695, C657-C673, and C663-C685. Residues H626, H628, and H630 each contribute to the Cu cation site. N644 is a glycosylation site (N-linked (GlcNAc...) asparagine). Positions 653-689 (KASFCLEDTECEGDIQKNYECANFGDQGITMGCWDMY) form a cross-link, lysine tyrosylquinone (Lys-Tyr). Y689 bears the 2',4',5'-topaquinone mark. Ca(2+) contacts are provided by E722, D724, N727, and N728. A disulfide bridge links C732 with C746.

It belongs to the lysyl oxidase family. Component of some chromatin repressor complex. Interacts with SNAI1. Interacts with TAF10. Interacts with HSPA5. Interacts with EFEMP2. Cu cation serves as cofactor. It depends on lysine tyrosylquinone residue as a cofactor. The lysine tyrosylquinone cross-link (LTQ) is generated by condensation of the epsilon-amino group of a lysine with a topaquinone produced by oxidation of tyrosine. Post-translationally, N-glycosylated. N-glycosylation on Asn-455 and Asn-644 may be essential for proper folding and secretion; may be composed of a fucosylated carbohydrates attached to a trimannose N-linked glycan core.

The protein localises to the secreted. It is found in the extracellular space. Its subcellular location is the extracellular matrix. The protein resides in the basement membrane. It localises to the nucleus. The protein localises to the chromosome. It is found in the endoplasmic reticulum. It carries out the reaction L-lysyl-[protein] + O2 + H2O = (S)-2-amino-6-oxohexanoyl-[protein] + H2O2 + NH4(+). Specifically inhibited by a mouse monoclonal antibody AB0023, inhibition occurs in a non-competitive manner. Its function is as follows. Mediates the post-translational oxidative deamination of lysine residues on target proteins leading to the formation of deaminated lysine (allysine). Acts as a transcription corepressor and specifically mediates deamination of trimethylated 'Lys-4' of histone H3 (H3K4me3), a specific tag for epigenetic transcriptional activation. Shows no activity against histone H3 when it is trimethylated on 'Lys-9' (H3K9me3) or 'Lys-27' (H3K27me3) or when 'Lys-4' is monomethylated (H3K4me1) or dimethylated (H3K4me2). Also mediates deamination of methylated TAF10, a member of the transcription factor IID (TFIID) complex, which induces release of TAF10 from promoters, leading to inhibition of TFIID-dependent transcription. LOXL2-mediated deamination of TAF10 results in transcriptional repression of genes required for embryonic stem cell pluripotency including POU5F1/OCT4, NANOG, KLF4 and SOX2. Involved in epithelial to mesenchymal transition (EMT) via interaction with SNAI1 and participates in repression of E-cadherin CDH1, probably by mediating deamination of histone H3. During EMT, involved with SNAI1 in negatively regulating pericentromeric heterochromatin transcription. SNAI1 recruits LOXL2 to pericentromeric regions to oxidize histone H3 and repress transcription which leads to release of heterochromatin component CBX5/HP1A, enabling chromatin reorganization and acquisition of mesenchymal traits. Interacts with the endoplasmic reticulum protein HSPA5 which activates the IRE1-XBP1 pathway of the unfolded protein response, leading to expression of several transcription factors involved in EMT and subsequent EMT induction. When secreted into the extracellular matrix, promotes cross-linking of extracellular matrix proteins by mediating oxidative deamination of peptidyl lysine residues in precursors to fibrous collagen and elastin. Acts as a regulator of sprouting angiogenesis, probably via collagen IV scaffolding. Acts as a regulator of chondrocyte differentiation, probably by regulating expression of factors that control chondrocyte differentiation. The sequence is that of Lysyl oxidase homolog 2 (LOXL2) from Pongo abelii (Sumatran orangutan).